Here is a 457-residue protein sequence, read N- to C-terminus: MGPVMPASKKAESSGISVSSGLSQRYRGSGFSKALQEDDDLDFPLPDIRLEEGAMEDEELTNLNWLHESKNLLKSFGESVLRSVSPVQDLDDDTPPSPAHSDMPYDARQNPNCKPPYSFSCLIFMAIEDSPTKRLPVKDIYNWILEHFPYFANAPTGWKNSVRHNLSLNKCFKKVDKERSQSIGKGSLWCIDPEYRQNLIQALKKTPYHPPPTPQAYQSTSGPPIWPGSTFFKRNGALLQVSPGVIQNGARVLSRGLFPGVRPLPITPIGMTAAIRNSITSCRMRTESEPPCGSPVVSGDPKEDHNYSSAKSSTARSTSPTSDSISSSSSSADDHYEFATKGSQEGSEGSFQSHESHSEPEEEDRKPSPKEGKDALGDSGYASQHKKRQHFAKARKVPSDTLPLKKRRTEKPPESDDEEMKEAAGSLLHLAGIRSCLNNITNRTAKGQKEQKETAKN.

The segment at 1-24 (MGPVMPASKKAESSGISVSSGLSQ) is disordered. Residues 13-23 (SSGISVSSGLS) are compositionally biased toward low complexity. Ser-83, Ser-85, and Ser-97 each carry phosphoserine. Residues 86 to 109 (PVQDLDDDTPPSPAHSDMPYDARQ) are disordered. A DNA-binding region (fork-head) is located at residues 114–210 (KPPYSFSCLI…QALKKTPYHP (97 aa)). Residues 285–422 (RTESEPPCGS…PESDDEEMKE (138 aa)) form a disordered region. Low complexity-rich tracts occupy residues 308-331 (SSAKSSTARSTSPTSDSISSSSSS) and 342-353 (GSQEGSEGSFQS). Positions 354–376 (HESHSEPEEEDRKPSPKEGKDAL) are enriched in basic and acidic residues. A compositionally biased stretch (basic residues) spans 384-396 (QHKKRQHFAKARK). Ser-415 is subject to Phosphoserine.

Interacts through its C-terminus with the C-terminus of SNW1/SKIP.

It localises to the nucleus. Functionally, acts as a transcriptional repressor. May be involved in DNA damage-inducible cell cycle arrests (checkpoints). The polypeptide is Forkhead box protein N3 (Foxn3) (Mus musculus (Mouse)).